The sequence spans 660 residues: Bifunctional polymyxin resistance protein ArnA (660 aa).

A formyltransferase ArnAFT region spans residues 1–304; sequence MKTVVFAYHD…MLGLVQGSRL (304 aa). A (6R)-10-formyltetrahydrofolate-binding site is contributed by 86–88; that stretch reads HLI. H104 acts as the Proton donor; for formyltransferase activity in catalysis. Residues R114 and 136 to 140 contribute to the (6R)-10-formyltetrahydrofolate site; that span reads VKRAD. Residues 314-660 form a dehydrogenase ArnADH region; it reads RRTRVLILGV…RTVDLTDKPS (347 aa). NAD(+)-binding positions include D347 and 368 to 369; that span reads DI. Residues A393, Y398, and 432–433 each bind UDP-alpha-D-glucuronate; that span reads TS. E434 functions as the Proton acceptor; for decarboxylase activity in the catalytic mechanism. UDP-alpha-D-glucuronate-binding positions include R460, N492, 526 to 535, and Y613; that span reads KLIDGGKQKR. The Proton donor; for decarboxylase activity role is filled by R619.

It in the N-terminal section; belongs to the Fmt family. UDP-L-Ara4N formyltransferase subfamily. This sequence in the C-terminal section; belongs to the NAD(P)-dependent epimerase/dehydratase family. UDP-glucuronic acid decarboxylase subfamily. In terms of assembly, homohexamer, formed by a dimer of trimers.

The catalysed reaction is UDP-alpha-D-glucuronate + NAD(+) = UDP-beta-L-threo-pentopyranos-4-ulose + CO2 + NADH. It carries out the reaction UDP-4-amino-4-deoxy-beta-L-arabinose + (6R)-10-formyltetrahydrofolate = UDP-4-deoxy-4-formamido-beta-L-arabinose + (6S)-5,6,7,8-tetrahydrofolate + H(+). It participates in nucleotide-sugar biosynthesis; UDP-4-deoxy-4-formamido-beta-L-arabinose biosynthesis; UDP-4-deoxy-4-formamido-beta-L-arabinose from UDP-alpha-D-glucuronate: step 1/3. The protein operates within nucleotide-sugar biosynthesis; UDP-4-deoxy-4-formamido-beta-L-arabinose biosynthesis; UDP-4-deoxy-4-formamido-beta-L-arabinose from UDP-alpha-D-glucuronate: step 3/3. Its pathway is bacterial outer membrane biogenesis; lipopolysaccharide biosynthesis. In terms of biological role, bifunctional enzyme that catalyzes the oxidative decarboxylation of UDP-glucuronic acid (UDP-GlcUA) to UDP-4-keto-arabinose (UDP-Ara4O) and the addition of a formyl group to UDP-4-amino-4-deoxy-L-arabinose (UDP-L-Ara4N) to form UDP-L-4-formamido-arabinose (UDP-L-Ara4FN). The modified arabinose is attached to lipid A and is required for resistance to polymyxin and cationic antimicrobial peptides. This Shigella flexneri serotype 5b (strain 8401) protein is Bifunctional polymyxin resistance protein ArnA.